The chain runs to 411 residues: Tubulin beta-2 chain (411 aa).

GTP is bound by residues Glu37, Ser106, Gly110, Thr111, Gly112, Asn172, and Asn194. Mg(2+) is bound at residue Glu37. The segment at 392 to 411 (QYQDATAEPEGXYEEDYDEA) is disordered. The segment covering 402–411 (GXYEEDYDEA) has biased composition (acidic residues).

This sequence belongs to the tubulin family. In terms of assembly, dimer of alpha and beta chains. A typical microtubule is a hollow water-filled tube with an outer diameter of 25 nm and an inner diameter of 15 nM. Alpha-beta heterodimers associate head-to-tail to form protofilaments running lengthwise along the microtubule wall with the beta-tubulin subunit facing the microtubule plus end conferring a structural polarity. Microtubules usually have 13 protofilaments but different protofilament numbers can be found in some organisms and specialized cells. Mg(2+) serves as cofactor.

The protein resides in the cytoplasm. It localises to the cytoskeleton. Its function is as follows. Tubulin is the major constituent of microtubules, a cylinder consisting of laterally associated linear protofilaments composed of alpha- and beta-tubulin heterodimers. Microtubules grow by the addition of GTP-tubulin dimers to the microtubule end, where a stabilizing cap forms. Below the cap, tubulin dimers are in GDP-bound state, owing to GTPase activity of alpha-tubulin. This is Tubulin beta-2 chain (TUBB2) from Anemia phyllitidis (Fern).